Consider the following 434-residue polypeptide: Magnesium transporter MRS2 homolog, mitochondrial (434 aa).

The N-terminal 53 residues, 1-53 (MECLRCLPGLLPRAAQPRRALWTAVARLSLAACGGRATPLRSRSPKASSTARA), are a transit peptide targeting the mitochondrion. Topologically, residues 54 to 330 (AGDVLRFRTS…SHRNVMMRLN (277 aa)) are mitochondrial matrix. Mg(2+)-binding residues include Glu-234, Thr-237, Asp-238, Glu-303, and Asp-320. Residues 331–350 (LQLTMGTFSLSLFGLMGVAF) form a helical membrane-spanning segment. Residues Gly-351 and Asn-353 each contribute to the Mg(2+) site. The GMN motif motif lies at 351–353 (GMN). Over 351–361 (GMNLESSLEED) the chain is Mitochondrial intermembrane. A helical transmembrane segment spans residues 362–392 (HRVFWLVTGIMFMGSGLIWRRLLSFLGRQLE). The Mitochondrial matrix segment spans residues 393–434 (APVPPVMTSLPKKTLLANRRMDVKNSLRPEGLGASRTILASR).

The protein belongs to the CorA metal ion transporter (MIT) (TC 1.A.35) family. Homopentamer. Ubiquitously expressed.

It localises to the mitochondrion inner membrane. Its activity is regulated as follows. May be regulated by calcium ions. Functionally, magnesium transporter that mediates the influx of magnesium into the mitochondrial matrix and regulates magnesium metabolism. Also permeable to calcium, sodium and potassium ions. Required for normal expression of the mitochondrial respiratory complex I subunits. May play a role in maintaining the inner mitochondrial membrane potential. This Mus musculus (Mouse) protein is Magnesium transporter MRS2 homolog, mitochondrial (Mrs2).